The chain runs to 166 residues: Ribosome maturation factor RimM (166 aa).

Residues 94–166 (GDEYYWRDLM…EMVVRLLPGL (73 aa)) enclose the PRC barrel domain.

It belongs to the RimM family. In terms of assembly, binds ribosomal protein uS19.

It is found in the cytoplasm. An accessory protein needed during the final step in the assembly of 30S ribosomal subunit, possibly for assembly of the head region. Essential for efficient processing of 16S rRNA. May be needed both before and after RbfA during the maturation of 16S rRNA. It has affinity for free ribosomal 30S subunits but not for 70S ribosomes. This Syntrophus aciditrophicus (strain SB) protein is Ribosome maturation factor RimM.